We begin with the raw amino-acid sequence, 88 residues long: Large ribosomal subunit protein bL31B (88 aa).

The protein belongs to the bacterial ribosomal protein bL31 family. Type B subfamily. Part of the 50S ribosomal subunit.

The protein is Large ribosomal subunit protein bL31B of Janthinobacterium sp. (strain Marseille) (Minibacterium massiliensis).